The sequence spans 152 residues: Xanthine-guanine phosphoribosyltransferase (152 aa).

5-phospho-alpha-D-ribose 1-diphosphate contacts are provided by residues 37–38, Arg69, and 88–96; these read RG and DDLVDTGGT. Residue Arg69 participates in GMP binding. Asp89 is a Mg(2+) binding site. 2 residues coordinate guanine: Asp92 and Ile135. Positions 92 and 135 each coordinate xanthine. GMP-binding positions include 92–96 and 134–135; these read DTGGT and WI.

Belongs to the purine/pyrimidine phosphoribosyltransferase family. XGPT subfamily. In terms of assembly, homotetramer. Requires Mg(2+) as cofactor.

It localises to the cell inner membrane. It carries out the reaction GMP + diphosphate = guanine + 5-phospho-alpha-D-ribose 1-diphosphate. The catalysed reaction is XMP + diphosphate = xanthine + 5-phospho-alpha-D-ribose 1-diphosphate. It catalyses the reaction IMP + diphosphate = hypoxanthine + 5-phospho-alpha-D-ribose 1-diphosphate. The protein operates within purine metabolism; GMP biosynthesis via salvage pathway; GMP from guanine: step 1/1. Its pathway is purine metabolism; XMP biosynthesis via salvage pathway; XMP from xanthine: step 1/1. Its function is as follows. Purine salvage pathway enzyme that catalyzes the transfer of the ribosyl-5-phosphate group from 5-phospho-alpha-D-ribose 1-diphosphate (PRPP) to the N9 position of the 6-oxopurines guanine and xanthine to form the corresponding ribonucleotides GMP (guanosine 5'-monophosphate) and XMP (xanthosine 5'-monophosphate), with the release of PPi. To a lesser extent, also acts on hypoxanthine. This is Xanthine-guanine phosphoribosyltransferase from Enterobacter sp. (strain 638).